The following is a 1063-amino-acid chain: Probable hemoglobin and hemoglobin-haptoglobin-binding protein 1 (1063 aa).

The N-terminal stretch at Met-1–Ala-24 is a signal peptide. Tandem repeats lie at residues Gln-26–Asn-29, Gln-30–Asn-33, Gln-34–Asn-37, Gln-38–Asn-41, Gln-42–Asn-45, Gln-46–Asn-49, and Gln-50–Asn-53. The tract at residues Gln-26–Asn-53 is 7 X 4 AA tandem repeats of Q-P-T-N. The span at Thr-28–Asn-55 shows a compositional bias: low complexity. Positions Thr-28–Asn-57 are disordered. The TonB box signature appears at Glu-63 to Ser-70. A TBDR plug domain is found at Asn-66–Lys-200. Residues Asp-208–Phe-1063 enclose the TBDR beta-barrel domain. Positions Asn-1046–Phe-1063 match the TonB C-terminal box motif.

It belongs to the TonB-dependent receptor family. Hemoglobin/haptoglobin binding protein subfamily.

Its subcellular location is the cell outer membrane. In terms of biological role, acts as a receptor for hemoglobin or the hemoglobin/haptoglobin complex of the human host and is required for heme uptake. The sequence is that of Probable hemoglobin and hemoglobin-haptoglobin-binding protein 1 from Haemophilus influenzae (strain ATCC 51907 / DSM 11121 / KW20 / Rd).